The chain runs to 288 residues: Diaminopimelate epimerase (288 aa).

Substrate contacts are provided by Asn-13, Gln-46, and Asn-66. The active-site Proton donor is the Cys-75. Residues 76–77, Asn-166, Asn-199, and 217–218 each bind substrate; these read GN and ER. The active-site Proton acceptor is the Cys-226. 227–228 contacts substrate; the sequence is GT.

The protein belongs to the diaminopimelate epimerase family. In terms of assembly, homodimer.

It localises to the cytoplasm. The catalysed reaction is (2S,6S)-2,6-diaminopimelate = meso-2,6-diaminopimelate. It functions in the pathway amino-acid biosynthesis; L-lysine biosynthesis via DAP pathway; DL-2,6-diaminopimelate from LL-2,6-diaminopimelate: step 1/1. In terms of biological role, catalyzes the stereoinversion of LL-2,6-diaminopimelate (L,L-DAP) to meso-diaminopimelate (meso-DAP), a precursor of L-lysine and an essential component of the bacterial peptidoglycan. The protein is Diaminopimelate epimerase of Cupriavidus necator (strain ATCC 17699 / DSM 428 / KCTC 22496 / NCIMB 10442 / H16 / Stanier 337) (Ralstonia eutropha).